The primary structure comprises 373 residues: tRNA (guanine(26)-N(2))-dimethyltransferase (373 aa).

The Trm1 methyltransferase domain maps to 2–365 (KIISEGETKL…AELSDLVVLI (364 aa)). S-adenosyl-L-methionine is bound by residues Arg-35, Arg-66, Asp-86, Asp-113, and Ala-114.

It belongs to the class I-like SAM-binding methyltransferase superfamily. Trm1 family.

It catalyses the reaction guanosine(26) in tRNA + 2 S-adenosyl-L-methionine = N(2)-dimethylguanosine(26) in tRNA + 2 S-adenosyl-L-homocysteine + 2 H(+). Its function is as follows. Dimethylates a single guanine residue at position 26 of a number of tRNAs using S-adenosyl-L-methionine as donor of the methyl groups. The chain is tRNA (guanine(26)-N(2))-dimethyltransferase from Methanococcus maripaludis (strain C5 / ATCC BAA-1333).